A 198-amino-acid chain; its full sequence is Ciliary neurotrophic factor (198 aa).

It belongs to the CNTF family. As to expression, nervous system.

Its subcellular location is the cytoplasm. In terms of biological role, CNTF is a survival factor for various neuronal cell types. Seems to prevent the degeneration of motor axons after axotomy. The protein is Ciliary neurotrophic factor (Cntf) of Mus musculus (Mouse).